The primary structure comprises 110 residues: uncharacterized protein (110 aa).

To M.jannaschii MJ1213 and A.aeolicus AA15.

This is an uncharacterized protein from Methanocaldococcus jannaschii (strain ATCC 43067 / DSM 2661 / JAL-1 / JCM 10045 / NBRC 100440) (Methanococcus jannaschii).